Reading from the N-terminus, the 466-residue chain is Uronate isomerase (466 aa).

Belongs to the metallo-dependent hydrolases superfamily. Uronate isomerase family.

The catalysed reaction is D-glucuronate = D-fructuronate. It catalyses the reaction aldehydo-D-galacturonate = keto-D-tagaturonate. Its pathway is carbohydrate metabolism; pentose and glucuronate interconversion. This Clostridium perfringens (strain 13 / Type A) protein is Uronate isomerase.